A 693-amino-acid polypeptide reads, in one-letter code: Phosphoribosylformylglycinamidine synthase subunit PurL (693 aa).

His-34 is a catalytic residue. ATP-binding residues include Tyr-37 and Lys-76. Glu-78 contacts Mg(2+). Substrate is bound by residues 79-82 and Arg-101; that span reads SHNH. His-80 (proton acceptor) is an active-site residue. Mg(2+) is bound at residue Asp-102. Residue Gln-222 participates in substrate binding. A Mg(2+)-binding site is contributed by Asp-248. 292–294 serves as a coordination point for substrate; that stretch reads ETQ. ATP is bound by residues Asp-470 and Gly-507. Ser-510 contacts substrate.

The protein belongs to the FGAMS family. In terms of assembly, monomer. Part of the FGAM synthase complex composed of 1 PurL, 1 PurQ and 2 PurS subunits.

It is found in the cytoplasm. It catalyses the reaction N(2)-formyl-N(1)-(5-phospho-beta-D-ribosyl)glycinamide + L-glutamine + ATP + H2O = 2-formamido-N(1)-(5-O-phospho-beta-D-ribosyl)acetamidine + L-glutamate + ADP + phosphate + H(+). The protein operates within purine metabolism; IMP biosynthesis via de novo pathway; 5-amino-1-(5-phospho-D-ribosyl)imidazole from N(2)-formyl-N(1)-(5-phospho-D-ribosyl)glycinamide: step 1/2. Functionally, part of the phosphoribosylformylglycinamidine synthase complex involved in the purines biosynthetic pathway. Catalyzes the ATP-dependent conversion of formylglycinamide ribonucleotide (FGAR) and glutamine to yield formylglycinamidine ribonucleotide (FGAM) and glutamate. The FGAM synthase complex is composed of three subunits. PurQ produces an ammonia molecule by converting glutamine to glutamate. PurL transfers the ammonia molecule to FGAR to form FGAM in an ATP-dependent manner. PurS interacts with PurQ and PurL and is thought to assist in the transfer of the ammonia molecule from PurQ to PurL. The sequence is that of Phosphoribosylformylglycinamidine synthase subunit PurL from Pyrobaculum neutrophilum (strain DSM 2338 / JCM 9278 / NBRC 100436 / V24Sta) (Thermoproteus neutrophilus).